Here is a 604-residue protein sequence, read N- to C-terminus: Netrin-1 (604 aa).

An N-terminal signal peptide occupies residues 1-24 (MMRAVWEALAALAAVACLVGAVRG). The region spanning 47 to 284 (HPRRCIPDFV…AVSDLQVGGR (238 aa)) is the Laminin N-terminal domain. N95, N116, and N131 each carry an N-linked (GlcNAc...) asparagine glycan. Cystine bridges form between C119-C152, C285-C294, C287-C304, C306-C315, C318-C338, C341-C350, C343-C368, C371-C380, C383-C401, C404-C416, C406-C423, C425-C434, C437-C451, C472-C544, and C491-C601. 3 Laminin EGF-like domains span residues 285-340 (CKCN…ECVA), 341-403 (CNCN…ACKA), and 404-453 (CDCH…PCIK). N417 carries an N-linked (GlcNAc...) asparagine glycan. The NTR domain maps to 472–601 (CDSYCKASKG…FQQREKKGKC (130 aa)). Positions 530-532 (RGD) match the Cell attachment site motif.

As to quaternary structure, binds to its receptors; DCC, UNC5A, UNC5B, UNC5C and probably UNC5D. Binds to its receptor; DSCAM. Interacts with APP. As to expression, in the embryo, widely expressed in the developing nervous system and in mesodermal tissues.

The protein localises to the secreted. The protein resides in the cytoplasm. Its function is as follows. Netrins control guidance of CNS commissural axons and peripheral motor axons. Its association with either DCC or some UNC5 receptors will lead to axon attraction or repulsion, respectively. Binding to UNC5C might cause dissociation of UNC5C from polymerized TUBB3 in microtubules and thereby lead to increased microtubule dynamics and axon repulsion. Involved in dorsal root ganglion axon projection towards the spinal cord. It also serves as a survival factor via its association with its receptors which prevent the initiation of apoptosis. Involved in colorectal tumorigenesis by regulating apoptosis. This chain is Netrin-1 (Ntn1), found in Mus musculus (Mouse).